A 172-amino-acid chain; its full sequence is Interferon tau-3 (172 aa).

2 disulfides stabilise this stretch: cysteine 1–cysteine 99 and cysteine 29–cysteine 139. The N-linked (GlcNAc...) asparagine glycan is linked to asparagine 78.

Belongs to the alpha/beta interferon family. IFN-alphaII subfamily. In terms of tissue distribution, constitutively and exclusively expressed in the mononuclear cells of the extraembryonic trophectoderm.

The protein resides in the secreted. Paracrine hormone primarily responsible for maternal recognition of pregnancy. Interacts with endometrial receptors, probably type I interferon receptors, and blocks estrogen receptor expression, preventing the estrogen-induced increase in oxytocin receptor expression in the endometrium. This results in the suppression of the pulsatile endometrial release of the luteolytic hormone prostaglandin F2-alpha, hindering the regression of the corpus luteum (luteolysis) and therefore a return to ovarian cyclicity. This, and a possible direct effect of IFN-tau on prostaglandin synthesis, leads in turn to continued ovarian progesterone secretion, which stimulates the secretion by the endometrium of the nutrients required for the growth of the conceptus. In summary, displays particularly high antiviral and antiproliferative potency concurrently with particular weak cytotoxicity, high antiluteolytic activity and immunomodulatory properties. In contrast with other IFNs, IFN-tau is not virally inducible. This Bos taurus (Bovine) protein is Interferon tau-3 (IFNT3).